The sequence spans 513 residues: Maturase K (513 aa).

The protein belongs to the intron maturase 2 family. MatK subfamily.

Its subcellular location is the plastid. The protein localises to the chloroplast. In terms of biological role, usually encoded in the trnK tRNA gene intron. Probably assists in splicing its own and other chloroplast group II introns. This Panicum capillare (Witchgrass) protein is Maturase K.